A 353-amino-acid chain; its full sequence is Nicotinate-nucleotide--dimethylbenzimidazole phosphoribosyltransferase (353 aa).

Glutamate 319 functions as the Proton acceptor in the catalytic mechanism.

This sequence belongs to the CobT family.

The enzyme catalyses 5,6-dimethylbenzimidazole + nicotinate beta-D-ribonucleotide = alpha-ribazole 5'-phosphate + nicotinate + H(+). The protein operates within nucleoside biosynthesis; alpha-ribazole biosynthesis; alpha-ribazole from 5,6-dimethylbenzimidazole: step 1/2. In terms of biological role, catalyzes the synthesis of alpha-ribazole-5'-phosphate from nicotinate mononucleotide (NAMN) and 5,6-dimethylbenzimidazole (DMB). The sequence is that of Nicotinate-nucleotide--dimethylbenzimidazole phosphoribosyltransferase from Chlorobaculum tepidum (strain ATCC 49652 / DSM 12025 / NBRC 103806 / TLS) (Chlorobium tepidum).